We begin with the raw amino-acid sequence, 230 residues long: Large ribosomal subunit protein uL1 (230 aa).

It belongs to the universal ribosomal protein uL1 family. As to quaternary structure, part of the 50S ribosomal subunit.

Its function is as follows. Binds directly to 23S rRNA. The L1 stalk is quite mobile in the ribosome, and is involved in E site tRNA release. In terms of biological role, protein L1 is also a translational repressor protein, it controls the translation of the L11 operon by binding to its mRNA. In Rhodopseudomonas palustris (strain BisA53), this protein is Large ribosomal subunit protein uL1.